Reading from the N-terminus, the 287-residue chain is MDPHTEFFLGKDRENASSPLIAPSRKIGLISAKVKTNETYSLFGKKKNQTAGTHLQFTSLTIKWTPLCPVTAGGQLNLVIHHNSSTVPILNIWSPTSTKWQQEVHGNLGFLTVNNCPYLVEGRLVGFSGTEAGIISITLHMDFKLRTQDLSPCKLIPSLIDNLHGPSFLYTSYTEDSVPDTNIHHLKHCIEDLQASVHALCGGRVHITESQALSLIATFRVRIVELLEHQEGTAFLNYNLATIKNMLTVATTSVVSKSYRTCLSNILDKMVVYDEAYWKKVLASPEK.

The protein belongs to the nucleorhabdovirus type-1 movement protein family.

Transports viral genome to neighboring plant cells directly through plasmosdesmata, without any budding. The movement protein allows efficient cell to cell propagation, by bypassing the host cell wall barrier. The chain is Movement protein (3) from Colocasia esculenta (Wild taro).